The following is a 645-amino-acid chain: 1,4-alpha-glucan branching enzyme GlgB (645 aa).

Catalysis depends on aspartate 309, which acts as the Nucleophile. The active-site Proton donor is glutamate 352. A disordered region spans residues 619 to 645 (VKTRKGSKKQDGSKTKVRSNVTSRGKR). Residues 636-645 (RSNVTSRGKR) are compositionally biased toward polar residues.

Belongs to the glycosyl hydrolase 13 family. GlgB subfamily. In terms of assembly, monomer.

It catalyses the reaction Transfers a segment of a (1-&gt;4)-alpha-D-glucan chain to a primary hydroxy group in a similar glucan chain.. It functions in the pathway glycan biosynthesis; glycogen biosynthesis. Catalyzes the formation of the alpha-1,6-glucosidic linkages in glycogen by scission of a 1,4-alpha-linked oligosaccharide from growing alpha-1,4-glucan chains and the subsequent attachment of the oligosaccharide to the alpha-1,6 position. This Bacillus cereus (strain ATCC 14579 / DSM 31 / CCUG 7414 / JCM 2152 / NBRC 15305 / NCIMB 9373 / NCTC 2599 / NRRL B-3711) protein is 1,4-alpha-glucan branching enzyme GlgB.